A 601-amino-acid chain; its full sequence is Uptake hydrogenase large subunit (601 aa).

Ni(2+)-binding residues include Cys74, Cys77, Cys580, and Cys583.

Belongs to the [NiFe]/[NiFeSe] hydrogenase large subunit family. Heterodimer of a large and a small subunit. Requires Ni(2+) as cofactor.

It is found in the cell membrane. It catalyses the reaction H2 + A = AH2. In terms of biological role, this enzyme recycles the H(2) produced by nitrogenase to increase the production of ATP and to protect nitrogenase against inhibition or damage by O(2) under carbon- or phosphate-limited conditions. In Azotobacter chroococcum mcd 1, this protein is Uptake hydrogenase large subunit (hupL).